Here is a 249-residue protein sequence, read N- to C-terminus: MVYKLVLIRHGESTWNKENKFTGWTDVDLSEKGVQEAHEAGKRLLKAGFTFDIAYTSVLKRAIRTLWILLEELNLYWIPVSRQWRLNERMYGSLQGLNKSETAAKYGEDQVLIWRRSYDIPPPALEESDERYPGNDPRYAKLDKSDLPKTECLKDTVERFLPLWNDTIAPTIKSGQKVLIAAHGNSIRALVKYLDNIADDKIVSMDIPTGIPLVYELDENLKPIKHYYLADESELNAAIQAVANQGKAK.

Substrate-binding positions include 9-16 (RHGESTWN), 22-23 (TG), R61, 88-91 (ERMY), K99, 115-116 (RR), and 184-185 (GN). H10 (tele-phosphohistidine intermediate) is an active-site residue. The active-site Proton donor/acceptor is the E88.

The protein belongs to the phosphoglycerate mutase family. BPG-dependent PGAM subfamily. In terms of assembly, homodimer.

The catalysed reaction is (2R)-2-phosphoglycerate = (2R)-3-phosphoglycerate. It catalyses the reaction (2R)-3-phospho-glyceroyl phosphate = (2R)-2,3-bisphosphoglycerate + H(+). Functionally, catalyzes the interconversion of 2-phosphoglycerate and 3-phosphoglycerate. This is Probable phosphoglycerate mutase (gpmA) from Dictyostelium discoideum (Social amoeba).